The primary structure comprises 486 residues: Transcription factor bHLH49 (486 aa).

The span at 1 to 17 (MDLSAKDEFSAEKRNPD) shows a compositional bias: basic and acidic residues. Disordered regions lie at residues 1 to 30 (MDLSAKDEFSAEKRNPDNYDSVNNPSGDWR) and 194 to 300 (KEST…KDGY). 2 stretches are compositionally biased toward polar residues: residues 198–221 (VRSSEQAKPNVPGSGNVSEDTQSS) and 243–254 (QKNSEAAQSHRS). Positions 273–293 (QSPNSPGKKSNSGKQQGKQSS) are enriched in low complexity. Residues 309 to 359 (QATNSHSLAERVRREKISERMKFLQDLVPGCNKVTGKAVMLDEIINYVQSL) enclose the bHLH domain.

As to quaternary structure, homodimer. Interacts with IBH1. As to expression, expressed constitutively in roots, stems, and flowers.

The protein resides in the nucleus. Its function is as follows. Transcriptional activator involved in cell elongation. Regulates the expression of a subset of genes involved in cell expansion by binding to the G-box motif. This is Transcription factor bHLH49 (BHLH49) from Arabidopsis thaliana (Mouse-ear cress).